The chain runs to 120 residues: NAD(P)H-quinone oxidoreductase subunit 3, chloroplastic (120 aa).

Transmembrane regions (helical) follow at residues 9-29 (IFWA…FISG), 64-84 (MFAL…PWAM), and 88-108 (VLGV…ILGL).

Belongs to the complex I subunit 3 family. In terms of assembly, NDH is composed of at least 16 different subunits, 5 of which are encoded in the nucleus.

It localises to the plastid. It is found in the chloroplast thylakoid membrane. It catalyses the reaction a plastoquinone + NADH + (n+1) H(+)(in) = a plastoquinol + NAD(+) + n H(+)(out). It carries out the reaction a plastoquinone + NADPH + (n+1) H(+)(in) = a plastoquinol + NADP(+) + n H(+)(out). Its function is as follows. NDH shuttles electrons from NAD(P)H:plastoquinone, via FMN and iron-sulfur (Fe-S) centers, to quinones in the photosynthetic chain and possibly in a chloroplast respiratory chain. The immediate electron acceptor for the enzyme in this species is believed to be plastoquinone. Couples the redox reaction to proton translocation, and thus conserves the redox energy in a proton gradient. The protein is NAD(P)H-quinone oxidoreductase subunit 3, chloroplastic of Barbarea verna (Land cress).